We begin with the raw amino-acid sequence, 696 residues long: Interleukin-1 receptor accessory protein-like 1 (696 aa).

An N-terminal signal peptide occupies residues 1-18 (MKAPIPHLILLYATFTQS). The 116-residue stretch at 19-134 (LKVVTKRGSA…YCMKVSISLT (116 aa)) folds into the Ig-like C2-type 1 domain. Residues 19–357 (LKVVTKRGSA…LLHKRELMYT (339 aa)) are Extracellular-facing. 2 disulfides stabilise this stretch: Cys-31/Cys-126 and Cys-53/Cys-118. N-linked (GlcNAc...) asparagine glycosylation is found at Asn-63, Asn-122, and Asn-138. 2 disulfide bridges follow: Cys-143–Cys-185 and Cys-164–Cys-216. Ig-like C2-type domains follow at residues 143–232 (CYNS…TELT) and 242–350 (PKLL…VLLH). Residues Asn-213, Asn-264, and Asn-331 are each glycosylated (N-linked (GlcNAc...) asparagine). A disulfide bond links Cys-267 and Cys-334. The helical transmembrane segment at 358-378 (VELAGGLGAILLLLVCLVTIY) threads the bilayer. Residues 379-696 (KCYKIEIMLF…RETSISSVIW (318 aa)) are Cytoplasmic-facing. A TIR domain is found at 403 to 559 (KDYDAYLSYT…KFWKRLQYEM (157 aa)). The active site involves Glu-491. An interaction with NCS1 region spans residues 549 to 644 (SKFWKRLQYE…TGTLPLTSIG (96 aa)). The tract at residues 659-680 (GQRPQTKSSREQNPDEAHTNSA) is disordered. Positions 666–676 (SSREQNPDEAH) are enriched in basic and acidic residues.

This sequence belongs to the interleukin-1 receptor family. Homodimer. Interacts (calcium-independent) with NCS1. Interacts (via the first immunoglobilin domain) with PTPRD (via the second immunoglobilin domain); this interaction is PTPRD-splicing-dependent and induces pre- and post-synaptic differentiation of neurons and is required for IL1RAPL1-mediated synapse formation. As to expression, detected at low levels in heart, skeletal muscle, ovary, skin, amygdala, caudate nucleus, corpus callosum, hippocampus, substantia nigra and thalamus. Detected at very low levels in tonsil, prostate, testis, small intestine, placenta, colon and fetal liver.

The protein localises to the cell membrane. The protein resides in the cytoplasm. Its subcellular location is the cell projection. It is found in the axon. It localises to the dendrite. It catalyses the reaction NAD(+) + H2O = ADP-D-ribose + nicotinamide + H(+). May regulate secretion and presynaptic differentiation through inhibition of the activity of N-type voltage-gated calcium channel. May activate the MAP kinase JNK. Plays a role in neurite outgrowth. During dendritic spine formation can bidirectionally induce pre- and post-synaptic differentiation of neurons by trans-synaptically binding to PTPRD. The chain is Interleukin-1 receptor accessory protein-like 1 (IL1RAPL1) from Homo sapiens (Human).